A 668-amino-acid chain; its full sequence is DNA ligase (668 aa).

Residues 32–36, 81–82, and glutamate 111 each bind NAD(+); these read DAEYD and SL. Lysine 113 (N6-AMP-lysine intermediate) is an active-site residue. Positions 134, 171, 290, and 314 each coordinate NAD(+). The Zn(2+) site is built by cysteine 408, cysteine 411, cysteine 426, and cysteine 432. Residues 591 to 668 enclose the BRCT domain; it reads EEDLSLKGQT…DEEALIAILS (78 aa).

The protein belongs to the NAD-dependent DNA ligase family. LigA subfamily. Mg(2+) serves as cofactor. Mn(2+) is required as a cofactor.

It carries out the reaction NAD(+) + (deoxyribonucleotide)n-3'-hydroxyl + 5'-phospho-(deoxyribonucleotide)m = (deoxyribonucleotide)n+m + AMP + beta-nicotinamide D-nucleotide.. In terms of biological role, DNA ligase that catalyzes the formation of phosphodiester linkages between 5'-phosphoryl and 3'-hydroxyl groups in double-stranded DNA using NAD as a coenzyme and as the energy source for the reaction. It is essential for DNA replication and repair of damaged DNA. The protein is DNA ligase of Shewanella pealeana (strain ATCC 700345 / ANG-SQ1).